Consider the following 289-residue polypeptide: Transcription factor MafA (289 aa).

Low complexity predominate over residues 52 to 73; the sequence is STPISTPCSSVPSSPSFCAPSP. Disordered stretches follow at residues 52-87 and 126-164; these read STPISTPCSSVPSSPSFCAPSPGAQSGVNPSNPNAA and HHHHHHHQGYDGFRGQQYPGDEMAPSGHHHQVHHHHHHH. Residues 74-87 show a composition bias toward polar residues; that stretch reads GAQSGVNPSNPNAA. A compositionally biased stretch (basic residues) spans 152–164; that stretch reads GHHHQVHHHHHHH. The interval 201–226 is basic motif; the sequence is RLKQKRRTLKNRGYAQSCRYKRVQQR. The bZIP domain maps to 201–264; sequence RLKQKRRTLK…DLYKDKYEKL (64 aa). The leucine-zipper stretch occupies residues 229-250; the sequence is LETEKCQLQSQVEQLKQEVSRL. Residues 266 to 289 are disordered; the sequence is SRSFTTRESPPQGNPGKANADFFM. The span at 267 to 276 shows a compositional bias: polar residues; the sequence is RSFTTRESPP.

This sequence belongs to the bZIP family. Maf subfamily.

It is found in the nucleus. Transcription factor, possibly involved in transcription regulation during lens development. The protein is Transcription factor MafA (mafa) of Xenopus tropicalis (Western clawed frog).